Reading from the N-terminus, the 246-residue chain is Proteasome subunit alpha type-6-B (246 aa).

Belongs to the peptidase T1A family. Component of the 20S core complex of the 26S proteasome. The 26S proteasome is composed of a core protease (CP), known as the 20S proteasome, capped at one or both ends by the 19S regulatory particle (RP/PA700). The 20S proteasome core is composed of 28 subunits that are arranged in four stacked rings, resulting in a barrel-shaped structure. The two end rings are each formed by seven alpha subunits, and the two central rings are each formed by seven beta subunits. The catalytic chamber with the active sites is on the inside of the barrel.

Its subcellular location is the cytoplasm. It is found in the nucleus. In terms of biological role, the proteasome is a multicatalytic proteinase complex which is characterized by its ability to cleave peptides with Arg, Phe, Tyr, Leu, and Glu adjacent to the leaving group at neutral or slightly basic pH. The proteasome has an ATP-dependent proteolytic activity. The protein is Proteasome subunit alpha type-6-B (PAA2) of Arabidopsis thaliana (Mouse-ear cress).